The sequence spans 326 residues: Beta-ketoacyl-[acyl-carrier-protein] synthase III (326 aa).

Residues cysteine 113 and histidine 253 contribute to the active site. Residues 254–258 form an ACP-binding region; that stretch reads QANIR. The active site involves asparagine 283.

It belongs to the thiolase-like superfamily. FabH family. In terms of assembly, homodimer.

It is found in the cytoplasm. The enzyme catalyses malonyl-[ACP] + acetyl-CoA + H(+) = 3-oxobutanoyl-[ACP] + CO2 + CoA. It participates in lipid metabolism; fatty acid biosynthesis. Its function is as follows. Catalyzes the condensation reaction of fatty acid synthesis by the addition to an acyl acceptor of two carbons from malonyl-ACP. Catalyzes the first condensation reaction which initiates fatty acid synthesis and may therefore play a role in governing the total rate of fatty acid production. Possesses both acetoacetyl-ACP synthase and acetyl transacylase activities. Its substrate specificity determines the biosynthesis of branched-chain and/or straight-chain of fatty acids. This chain is Beta-ketoacyl-[acyl-carrier-protein] synthase III, found in Wolbachia sp. subsp. Brugia malayi (strain TRS).